A 213-amino-acid chain; its full sequence is C-type lectin domain family 4 member C (213 aa).

At 1–21 the chain is on the cytoplasmic side; the sequence is MVPEEEPQDREKGLWWFQLKV. The helical; Signal-anchor for type II membrane protein transmembrane segment at 22-44 threads the bilayer; sequence WSMAVVSILLLSVCFTVSSVVPH. Residues 45–213 are Extracellular-facing; that stretch reads NFMYSKTVKR…SICKMKKIYI (169 aa). 2 cysteine pairs are disulfide-bonded: Cys-70–Cys-82 and Cys-83–Cys-94. One can recognise a C-type lectin domain in the interval 90–207; the sequence is FQSSCYFIST…CHVPQKSICK (118 aa). Asn-110 and Asn-137 each carry an N-linked (GlcNAc...) asparagine glycan. 2 disulfide bridges follow: Cys-111–Cys-206 and Cys-180–Cys-198. Ser-139 lines the a carbohydrate pocket. N-linked (GlcNAc...) asparagine glycosylation is present at Asn-164. Positions 172, 174, and 178 each coordinate Ca(2+). Residues Glu-178, 184–186, Asn-194, 194–195, and Gln-202 each bind a carbohydrate; these read NFR and ND. Asn-194 and Asp-195 together coordinate Ca(2+).

As to quaternary structure, homodimer. Expressed in plasmacytoid dendritic cells (PDCs). Constitutively expressed in immature monocyte-derived dendritic cells (iMDDC) and is significantly down-regulated upon maturation with LPS but not with TNF-alpha.

The protein resides in the cell membrane. Lectin-type cell surface receptor which may play a role in antigen capturing by dendritic cells. Specifically recognizes non-sialylated galactose-terminated biantennary glycans containing the trisaccharide epitope Gal(beta1-3/4)GlcNAc(beta1-2)Man. Binds to serum IgG. Efficiently targets ligand into antigen-processing and peptide-loading compartments for presentation to T-cells. May mediate potent inhibition of induction of IFN-alpha/beta expression in plasmacytoid dendritic cells. May act as a signaling receptor that activates protein-tyrosine kinases and mobilizes intracellular calcium. The polypeptide is C-type lectin domain family 4 member C (CLEC4C) (Homo sapiens (Human)).